We begin with the raw amino-acid sequence, 517 residues long: Fluconazole resistance protein 1 (517 aa).

A DNA-binding region (zn(2)-C6 fungal-type) is located at residues 26-52 (CDSCRIKKTKCDGKKPCNRCTLDNKIC). Disordered regions lie at residues 106–137 (KSVD…QNST), 250–270 (SAQF…QQQQ), 284–307 (SDIE…PPTS), and 378–403 (GSIQ…VSSF). Residues 113-124 (SSPASSTPNSSS) show a composition bias toward low complexity. Over residues 250–260 (SAQFSKGTFSP) the composition is skewed to polar residues. Positions 261–270 (QQQQLQQQQQ) are enriched in low complexity. The segment covering 298–307 (NSGSVSPPTS) has biased composition (polar residues). The span at 388 to 398 (GSVHKPVRNHS) shows a compositional bias: basic residues.

It is found in the nucleus. Functionally, transcription factor that acts as a negative regulator of fluconazole resistance in C.albicans. Also confers fluconazole resistance in S.cerevisiae by activation of the PDR5 gene. The protein is Fluconazole resistance protein 1 (FCR1) of Candida albicans (Yeast).